Consider the following 381-residue polypeptide: Periphilin-1 (381 aa).

Composition is skewed to basic and acidic residues over residues 1–28, 39–65, and 79–121; these read MWSEGRYDYDRLPRERVPPRSHPSDGYH, PLLDKRPPLLDKRPPLLARPDEGGYSR, and RSFS…DGFR. Disordered regions lie at residues 1–65 and 79–260; these read MWSE…GYSR and RSFS…KSDE. Residues 117-123 carry the Nuclear localization signal motif; the sequence is RDGFRRK. Lys123 is covalently cross-linked (Glycyl lysine isopeptide (Lys-Gly) (interchain with G-Cter in SUMO2)). 4 positions are modified to phosphoserine: Ser124, Ser128, Ser147, and Ser154. The span at 130–156 shows a compositional bias: basic and acidic residues; the sequence is YSRDRSPHKRDAPFFRESPVGRKDSPH. Positions 157–168 are enriched in low complexity; the sequence is SRSGSSVSSRSY. Basic residues predominate over residues 175 to 187; sequence THSFHQSQHRKSS. Ser181 carries the post-translational modification Phosphoserine. Residue Lys194 forms a Glycyl lysine isopeptide (Lys-Gly) (interchain with G-Cter in SUMO2) linkage. Over residues 195 to 208 the composition is skewed to basic and acidic residues; sequence RQNEAIRGRGKERS. Ser211 carries the post-translational modification Phosphoserine. Residue Lys213 forms a Glycyl lysine isopeptide (Lys-Gly) (interchain with G-Cter in SUMO2) linkage. A phosphoserine mark is found at Ser215 and Ser219. Positions 217–230 are enriched in low complexity; it reads DASPSSSSAVASSK. Basic and acidic residues predominate over residues 231–260; the sequence is ALDKPSRLTEKELAEAESKWANETLEKSDE. Residue Lys241 forms a Glycyl lysine isopeptide (Lys-Gly) (interchain with G-Cter in SUMO2) linkage. Residue Lys249 is modified to N6-acetyllysine; alternate. Lys249 is covalently cross-linked (Glycyl lysine isopeptide (Lys-Gly) (interchain with G-Cter in SUMO2); alternate). A Phosphoserine modification is found at Ser339. Lys342 is covalently cross-linked (Glycyl lysine isopeptide (Lys-Gly) (interchain with G-Cter in SUMO2)).

As to quaternary structure, homodimer. Component of the HUSH complex; at least composed of TASOR, PPHLN1 and MPHOSPH8. Interacts with SIN3A and HDAC1. May interact with PPL. Ubiquitously expressed. Strong expression in the developing somites and limbs, the embryonic nervous system and the adult brain.

The protein resides in the nucleus. It is found in the cytoplasm. It localises to the chromosome. Its function is as follows. Component of the HUSH complex, a multiprotein complex that mediates epigenetic repression. The HUSH complex is recruited to genomic loci rich in H3K9me3 and is probably required to maintain transcriptional silencing by promoting recruitment of SETDB1, a histone methyltransferase that mediates further deposition of H3K9me3. In the HUSH complex, contributes to the maintenance of the complex at chromatin. Acts as a transcriptional corepressor and regulates the cell cycle, probably via the HUSH complex. The HUSH complex is also involved in the silencing of unintegrated retroviral DNA: some part of the retroviral DNA formed immediately after infection remains unintegrated in the host genome and is transcriptionally repressed. May be involved in epithelial differentiation by contributing to epidermal integrity and barrier formation. The chain is Periphilin-1 from Mus musculus (Mouse).